Reading from the N-terminus, the 62-residue chain is Defensin BmKDfsin5 (62 aa).

An N-terminal signal peptide occupies residues 1–24 (MKVIALFFLFAFIFCTLEVAIVEA). 3 disulfides stabilise this stretch: Cys28-Cys49, Cys35-Cys57, and Cys39-Cys59.

It belongs to the invertebrate defensin family. Type 2 subfamily. In terms of tissue distribution, highly expressed in non-venom gland (hemolymph) and moderately expressed in venom gland.

It localises to the secreted. Antibacterial peptide active against Gram-positive bacteria (including S.aureus ATCC25923 (MIC=2.5 uM), M.luteus AB93113 (MIC=2.5 uM), and the antibiotic-resistant S.epidermidis PRSE P1389 (MIC=1.25 uM)), but not against Gram-negative bacteria (including E.coli and P.aeruginosa). Also has weak blocking activity on Kv1.1/KCNA1 (8.7% inhibition), Kv1.2/KCNA2 (10.2% inhibition), Kv1.3/KCNA3 (9.0% inhibition), KCa3.1/KCNN4/IK (9.1% inhibition), KCa2.3/KCNN3/SK3 (46.3% inhibition) and Kv11.1/KCNH2/ERG1 (16.9% inhibition) channels (tested at 1 uM). It inhibits potassium channel current by interacting with the pore region. This chain is Defensin BmKDfsin5, found in Olivierus martensii (Manchurian scorpion).